Here is a 28-residue protein sequence, read N- to C-terminus: Odorant-binding protein 1 (28 aa).

It belongs to the calycin superfamily. Lipocalin family. Nasal mucosa.

It is found in the secreted. It localises to the extracellular space. Functionally, this soluble protein may play a specific role in odor discrimination and perception. The polypeptide is Odorant-binding protein 1 (Hystrix cristata (North African crested porcupine)).